The following is a 66-amino-acid chain: Large ribosomal subunit protein uL29 (66 aa).

This sequence belongs to the universal ribosomal protein uL29 family.

This chain is Large ribosomal subunit protein uL29, found in Rhizobium etli (strain ATCC 51251 / DSM 11541 / JCM 21823 / NBRC 15573 / CFN 42).